Reading from the N-terminus, the 76-residue chain is DNA-directed RNA polymerase subunit omega (76 aa).

This sequence belongs to the RNA polymerase subunit omega family. In terms of assembly, in cyanobacteria the RNAP catalytic core is composed of 2 alpha, 1 beta, 1 beta', 1 gamma and 1 omega subunit. When a sigma factor is associated with the core the holoenzyme is formed, which can initiate transcription.

It catalyses the reaction RNA(n) + a ribonucleoside 5'-triphosphate = RNA(n+1) + diphosphate. In terms of biological role, promotes RNA polymerase assembly. Latches the N- and C-terminal regions of the beta' subunit thereby facilitating its interaction with the beta and alpha subunits. This Synechocystis sp. (strain ATCC 27184 / PCC 6803 / Kazusa) protein is DNA-directed RNA polymerase subunit omega (rpoZ).